Consider the following 489-residue polypeptide: Bypass of stop codon protein 5 (489 aa).

The interval 1 to 42 is disordered; that stretch reads MQESKEPQNKFEGCQRISSSSSTLFGGTSFEEPRCGTSQGKE. Over residues 18–30 the composition is skewed to low complexity; that stretch reads SSSSSTLFGGTSF. 2 positions are modified to phosphoserine: Ser-111 and Ser-350.

The protein belongs to the BUL1 family.

Appears to play a role in translation fidelity, and may act when translation is compromised. May be a component of the ubiquitination pathway. This chain is Bypass of stop codon protein 5 (BSC5), found in Saccharomyces cerevisiae (strain ATCC 204508 / S288c) (Baker's yeast).